We begin with the raw amino-acid sequence, 109 residues long: Large ribosomal subunit protein uL22 (109 aa).

Over residues 84-95 the composition is skewed to basic residues; the sequence is ARGTASRIRKPT. Positions 84-109 are disordered; that stretch reads ARGTASRIRKPTSHIMVEVSKPSKEA.

Belongs to the universal ribosomal protein uL22 family. As to quaternary structure, part of the 50S ribosomal subunit.

In terms of biological role, this protein binds specifically to 23S rRNA; its binding is stimulated by other ribosomal proteins, e.g. L4, L17, and L20. It is important during the early stages of 50S assembly. It makes multiple contacts with different domains of the 23S rRNA in the assembled 50S subunit and ribosome. Functionally, the globular domain of the protein is located near the polypeptide exit tunnel on the outside of the subunit, while an extended beta-hairpin is found that lines the wall of the exit tunnel in the center of the 70S ribosome. This chain is Large ribosomal subunit protein uL22, found in Campylobacter hominis (strain ATCC BAA-381 / DSM 21671 / CCUG 45161 / LMG 19568 / NCTC 13146 / CH001A).